A 98-amino-acid polypeptide reads, in one-letter code: MMKRLIPTFNRILVQRVIQPAKTESGILLPEKSSKLNSGKVIAVGPGSRDKDGKLIPVSVKEGDTVLLPEYGGTQVKLGENEYHLFRDEDVLGTLHED.

A mitochondrion-targeting transit peptide spans 1–17; that stretch reads MMKRLIPTFNRILVQRV. The tract at residues 18-94 is cpn-10 domain; that stretch reads IQPAKTESGI…LFRDEDVLGT (77 aa).

It belongs to the GroES chaperonin family. Forms stable complexes with CPN60 in the presence of ATP.

It localises to the mitochondrion. Functionally, seems to function only as a co-chaperone, along with CPN60, and in certain cases is essential for the discharge of biologically active proteins from CPN60. This is 10 kDa chaperonin, mitochondrial (CPN10) from Arabidopsis thaliana (Mouse-ear cress).